Here is a 696-residue protein sequence, read N- to C-terminus: UvrABC system protein C (696 aa).

In terms of domain architecture, GIY-YIG spans 16–95 (TEPGVYKFRD…IKRFDPRFNV (80 aa)). Positions 208–243 (DKVTRKLNADMMAAAEELDFERAARLRDDLEAIDKV) constitute a UVR domain.

Belongs to the UvrC family. In terms of assembly, interacts with UvrB in an incision complex.

It is found in the cytoplasm. The UvrABC repair system catalyzes the recognition and processing of DNA lesions. UvrC both incises the 5' and 3' sides of the lesion. The N-terminal half is responsible for the 3' incision and the C-terminal half is responsible for the 5' incision. The polypeptide is UvrABC system protein C (Corynebacterium glutamicum (strain R)).